The chain runs to 22 residues: Mu-conotoxin TIIIA (22 aa).

3 cysteine pairs are disulfide-bonded: Cys-4-Cys-16, Cys-5-Cys-21, and Cys-11-Cys-22. 2 positions are modified to 4-hydroxyproline: Pro-8 and Pro-18. Residue Cys-22 is modified to Cysteine amide.

Belongs to the conotoxin M superfamily. As to expression, expressed by the venom duct.

Its subcellular location is the secreted. Functionally, mu-conotoxins block voltage-gated sodium channels (Nav). This synthetic toxin reversibly and potently blocks rNav1.4/SCN4A (IC(50) is 9 nM) and rNav1.2/SCN2A (IC(50) is 40 nM). It also moderately blocks rNav1.1/SCN1A, rNav1.3/SCN3A, and rNav1.6/SCN8A. The block of SCN1A and SCN2A is modified when beta-subunits are coexpressed with alpha subunits. Hence, blocks of channels containing beta-1 and beta-3 subunits are more potent (compared to channels without beta subunits), whereas blocks of channels containing beta-2 and beta-4 subunits are less potent (compared to channels without beta subunits). The sequence is that of Mu-conotoxin TIIIA from Conus tulipa (Fish-hunting cone snail).